Reading from the N-terminus, the 77-residue chain is MNLRRCVQALLLLWLCLSAVCGGPLLQTSDGKEMEEGTIRYLVQPRGPRSGPGPWQGGRRKFRRQRPRLSHKGPMPF.

Positions 1-22 are cleaved as a signal peptide; the sequence is MNLRRCVQALLLLWLCLSAVCG. The propeptide occupies 23-41; sequence GPLLQTSDGKEMEEGTIRY. The segment at 43 to 77 is disordered; sequence VQPRGPRSGPGPWQGGRRKFRRQRPRLSHKGPMPF. Residues 58–71 show a composition bias toward basic residues; sequence GRRKFRRQRPRLSH. Residue glutamine 65 is modified to Pyrrolidone carboxylic acid.

The protein belongs to the apelin family. At least 5 active peptides may be produced by proteolytic processing of the peptide precursor.

It is found in the secreted. The protein localises to the extracellular space. In terms of biological role, peptide hormone that functions as endogenous ligand for the G-protein-coupled apelin receptor (APLNR/APJ), that plays a role in cadiovascular homeostasis. Functions as a balanced agonist activating both G(i) protein pathway and beta-arrestin pathway of APLNR. Downstream G proteins activation, apelin can inhibit cAMP production and activate key intracellular effectors such as ERKs. On the other hand, APLNR activation induces beta-arrestin recruitment to the membrane leading to desensitization and internalization of the receptor. Apelin blunts cardiac hypertrophic induction from APLNR on response to pathological stimuli, but also induces myocardial hypertrophy under normal conditions. Apelin-36 dissociates more hardly than (pyroglu)apelin-13 from APLNR. Involved in the regulation of cardiac precursor cell movements during gastrulation and heart morphogenesis. Has an inhibitory effect on cytokine production in response to T-cell receptor/CD3 cross-linking; the oral intake of apelin in the colostrum and the milk might therefore modulate immune responses in neonates. Plays a role in early coronary blood vessels formation. Mediates myocardial contractility in an ERK1/2-dependent manner. May also have a role in the central control of body fluid homeostasis by influencing vasopressin release and drinking behavior. This is Apelin (APLN) from Bos taurus (Bovine).